The chain runs to 117 residues: Large ribosomal subunit protein bL19 (117 aa).

The protein belongs to the bacterial ribosomal protein bL19 family.

Functionally, this protein is located at the 30S-50S ribosomal subunit interface and may play a role in the structure and function of the aminoacyl-tRNA binding site. This Thioalkalivibrio sulfidiphilus (strain HL-EbGR7) protein is Large ribosomal subunit protein bL19.